The sequence spans 170 residues: Small ribosomal subunit protein uS13 (170 aa).

The span at 128–140 (VRHKRGQKVRGQR) shows a compositional bias: basic residues. The segment at 128-170 (VRHKRGQKVRGQRTKSTGRTEGTIGVNVEAIKEEQAEDGGDEE) is disordered.

This sequence belongs to the universal ribosomal protein uS13 family. In terms of assembly, part of the 30S ribosomal subunit. Forms a loose heterodimer with protein S19. Forms two bridges to the 50S subunit in the 70S ribosome.

In terms of biological role, located at the top of the head of the 30S subunit, it contacts several helices of the 16S rRNA. In the 70S ribosome it contacts the 23S rRNA (bridge B1a) and protein L5 of the 50S subunit (bridge B1b), connecting the 2 subunits; these bridges are implicated in subunit movement. The chain is Small ribosomal subunit protein uS13 from Natronomonas pharaonis (strain ATCC 35678 / DSM 2160 / CIP 103997 / JCM 8858 / NBRC 14720 / NCIMB 2260 / Gabara) (Halobacterium pharaonis).